A 284-amino-acid chain; its full sequence is uncharacterized protein (284 aa).

The tract at residues 236–284 (IDITNEADSSEIIDSEPSNKDETEKPSAQETDPFDGKPVDIKDDELPFD) is disordered. Basic and acidic residues-rich tracts occupy residues 252 to 262 (PSNKDETEKPS) and 269 to 284 (FDGK…LPFD).

This is an uncharacterized protein from Bacillus subtilis (strain 168).